The primary structure comprises 254 residues: Thiazole synthase (254 aa).

The Schiff-base intermediate with DXP role is filled by Lys-95. Residues Gly-156, 182–183 (AG), and 204–205 (NT) contribute to the 1-deoxy-D-xylulose 5-phosphate site.

The protein belongs to the ThiG family. Homotetramer. Forms heterodimers with either ThiH or ThiS.

It is found in the cytoplasm. It catalyses the reaction [ThiS sulfur-carrier protein]-C-terminal-Gly-aminoethanethioate + 2-iminoacetate + 1-deoxy-D-xylulose 5-phosphate = [ThiS sulfur-carrier protein]-C-terminal Gly-Gly + 2-[(2R,5Z)-2-carboxy-4-methylthiazol-5(2H)-ylidene]ethyl phosphate + 2 H2O + H(+). The protein operates within cofactor biosynthesis; thiamine diphosphate biosynthesis. Its function is as follows. Catalyzes the rearrangement of 1-deoxy-D-xylulose 5-phosphate (DXP) to produce the thiazole phosphate moiety of thiamine. Sulfur is provided by the thiocarboxylate moiety of the carrier protein ThiS. In vitro, sulfur can be provided by H(2)S. The protein is Thiazole synthase of Shewanella oneidensis (strain ATCC 700550 / JCM 31522 / CIP 106686 / LMG 19005 / NCIMB 14063 / MR-1).